We begin with the raw amino-acid sequence, 316 residues long: Ribosomal RNA small subunit methyltransferase H (316 aa).

S-adenosyl-L-methionine-binding positions include Gly35–His37, Asp55, Phe79, Asp101, and Gln108.

The protein belongs to the methyltransferase superfamily. RsmH family.

The protein localises to the cytoplasm. It carries out the reaction cytidine(1402) in 16S rRNA + S-adenosyl-L-methionine = N(4)-methylcytidine(1402) in 16S rRNA + S-adenosyl-L-homocysteine + H(+). Its function is as follows. Specifically methylates the N4 position of cytidine in position 1402 (C1402) of 16S rRNA. This Vibrio proteolyticus (Aeromonas proteolytica) protein is Ribosomal RNA small subunit methyltransferase H.